The primary structure comprises 123 residues: Small ribosomal subunit protein uS12 (123 aa).

The tract at residues Met1–Pro28 is disordered. A 3-methylthioaspartic acid modification is found at Asp89. Residues Thr104–Lys123 are disordered. The segment covering Lys108–Lys123 has biased composition (basic residues).

Belongs to the universal ribosomal protein uS12 family. Part of the 30S ribosomal subunit. Contacts proteins S8 and S17. May interact with IF1 in the 30S initiation complex.

Functionally, with S4 and S5 plays an important role in translational accuracy. Its function is as follows. Interacts with and stabilizes bases of the 16S rRNA that are involved in tRNA selection in the A site and with the mRNA backbone. Located at the interface of the 30S and 50S subunits, it traverses the body of the 30S subunit contacting proteins on the other side and probably holding the rRNA structure together. The combined cluster of proteins S8, S12 and S17 appears to hold together the shoulder and platform of the 30S subunit. The polypeptide is Small ribosomal subunit protein uS12 (Hyphomonas neptunium (strain ATCC 15444)).